The primary structure comprises 1146 residues: Lysine-specific demethylase 2A (1146 aa).

The JmjC domain occupies 146 to 314 (FSHTKLENLV…MQLRIYSIED (169 aa)). T207 is a substrate binding site. Residues H210 and D212 each contribute to the Fe cation site. Position 227 (K227) interacts with substrate. H282 is a binding site for Fe cation. 2 disordered regions span residues 363–467 (LNGR…PDSP) and 554–585 (TKPH…SSGA). Low complexity predominate over residues 373-387 (SSSSSSSSSGLSSSS). Residues 388 to 401 (DNDDSSDQDWEEEE) show a composition bias toward acidic residues. Over residues 402–442 (GLRKRERDRCRVERELQRKRNRDRQQRDQERDRHGRTERII) the composition is skewed to basic and acidic residues. Pro residues predominate over residues 453–467 (LTPPPSLPLPTPDSP). Residues 566-584 (STAPPRTSGTPSGTTASSG) show a composition bias toward low complexity. The CXXC-type zinc-finger motif lies at 585 to 631 (ARRRRVRCRKCQACVQRECGTCHYCKDMKKFGGPGRMKQSCVLRQCL). C592, C595, C598, C603, C606, C609, C625, and C630 together coordinate Zn(2+). The segment at 638–699 (SVTCALCGEV…YWECPKCYEG (62 aa)) adopts a PHD-type zinc-finger fold. Disordered stretches follow at residues 733–800 (VLRP…EGDR) and 832–867 (TPNP…ENVM). A compositionally biased stretch (pro residues) spans 739–762 (GQSPPSPPLLLLPPSPSSAPPTPP). Positions 772 to 789 (SREERAKRRQLAREKENH) are enriched in basic and acidic residues. Over residues 849–864 (EREEEEEEEEEEEETE) the composition is skewed to acidic residues. The region spanning 874–919 (STSMQKDVWLSVFHYLTHEELCICMRVCKAWYKWGCDKRLWSRIDV) is the F-box domain. 6 LRR repeats span residues 945–966 (WTNV…LKDL), 968–994 (LAGC…DLRW), 1032–1057 (GLDI…DLSH), 1058–1087 (CPLL…HLAG), 1088–1112 (CKGV…DLHG), and 1113–1138 (CKQV…CLSD).

Belongs to the JHDM1 histone demethylase family. It depends on Fe(2+) as a cofactor.

It is found in the nucleus. Its subcellular location is the nucleoplasm. It carries out the reaction N(6),N(6)-dimethyl-L-lysyl(36)-[histone H3] + 2 2-oxoglutarate + 2 O2 = L-lysyl(36)-[histone H3] + 2 formaldehyde + 2 succinate + 2 CO2. Histone demethylase that specifically demethylates 'Lys-36' of histone H3, thereby playing a central role in histone code. Preferentially demethylates dimethylated H3 'Lys-36' residue while it has weak or no activity for mono- and tri-methylated H3 'Lys-36'. May also recognize and bind to some phosphorylated proteins and promote their ubiquitination and degradation. Required to maintain the heterochromatic state. Associates with centromeres and represses transcription of small non-coding RNAs that are encoded by the clusters of satellite repeats at the centromere. Required to sustain centromeric integrity and genomic stability, particularly during mitosis. May play a role in the regulation of circadian gene expression. This chain is Lysine-specific demethylase 2A (kdm2a), found in Xenopus tropicalis (Western clawed frog).